A 243-amino-acid chain; its full sequence is Small ribosomal subunit protein uS2c (243 aa).

It belongs to the universal ribosomal protein uS2 family.

It is found in the plastid. Its subcellular location is the chloroplast. This Cyanidium caldarium (Red alga) protein is Small ribosomal subunit protein uS2c (rps2).